We begin with the raw amino-acid sequence, 84 residues long: GTP cyclohydrolase 1 feedback regulatory protein (84 aa).

The protein belongs to the GFRP family. In terms of assembly, homopentamer. Forms a complex with GCH1 where a GCH1 homodecamer is sandwiched by two GFRP homopentamers.

It localises to the nucleus. Its subcellular location is the nucleus membrane. The protein localises to the cytoplasm. It is found in the cytosol. Mediates tetrahydrobiopterin inhibition of GTP cyclohydrolase 1. The polypeptide is GTP cyclohydrolase 1 feedback regulatory protein (gchfr) (Xenopus tropicalis (Western clawed frog)).